We begin with the raw amino-acid sequence, 342 residues long: Aquaporin-7 (342 aa).

Topologically, residues 1-36 (MVQASGHRRSTRGSKMVSWSVIAKIQEILQRKMVRE) are cytoplasmic. A Phosphoserine modification is found at Ser-20. A helical membrane pass occupies residues 37–54 (FLAEFMSTYVMMVFGLGS). Topologically, residues 55 to 67 (VAHMVLNKKYGSY) are extracellular. Residues 68-85 (LGVNLGFGFGVTMGVHVA) traverse the membrane as a helical segment. Over 86 to 89 (GRIS) the chain is Cytoplasmic. The segment at residues 90–103 (GAHMNAAVTFANCA) is an intramembrane region (discontinuously helical). Positions 94–96 (NAA) match the NPA 1 motif. Residues 104–111 (LGRVPWRK) lie on the Cytoplasmic side of the membrane. The chain crosses the membrane as a helical span at residues 112 to 132 (FPVYVLGQFLGSFLAAATIYS). The Extracellular portion of the chain corresponds to 133–170 (LFYTAILHFSGGQLMVTGPVATAGIFATYLPDHMTLWR). Residues 171 to 188 (GFLNEAWLTGMLQLCLFA) traverse the membrane as a helical segment. The Cytoplasmic segment spans residues 189-200 (ITDQENNPALPG). The helical transmembrane segment at 201-217 (TEALVIGILVVIIGVSL) threads the bilayer. The Extracellular segment spans residues 218 to 221 (GMNT). Residues 222–235 (GYAINPSRDLPPRI) constitute an intramembrane region (discontinuously helical). The NPA 2 signature appears at 226–228 (NPS). Residues 236–253 (FTFIAGWGKQVFSNGENW) lie on the Extracellular side of the membrane. Residues 254–275 (WWVPVVAPLLGAYLGGIIYLVF) traverse the membrane as a helical segment. At 276–342 (IGSTIPREPL…LHESMALEHF (67 aa)) the chain is on the cytoplasmic side.

The protein belongs to the MIP/aquaporin (TC 1.A.8) family. Homotetramer; each monomer provides an independent glycerol/water pore. Two homotetramers on opposing membranes can dimerize, forming a cell-cell junction. Interacts with PLIN1. Post-translationally, phosphorylation by PKA could prevent the interaction with PLIN1. Detected in the sperm head (at protein level). Detected in white adipose tissue.

Its subcellular location is the cell membrane. The protein localises to the cytoplasmic vesicle membrane. The protein resides in the lipid droplet. The enzyme catalyses glycerol(in) = glycerol(out). It carries out the reaction H2O(in) = H2O(out). The catalysed reaction is urea(in) = urea(out). Its activity is regulated as follows. Glycerol transport is regulated by pH, with the porin being permeable to glycerol at pH 7.4 but not at pH 5.5. Water permeability, however, is not influenced by pH. Inhibited by mercury ions. In terms of biological role, aquaglyceroporins form homotetrameric transmembrane channels, with each monomer independently mediating glycerol and water transport across the plasma membrane along their osmotic gradient. Could also be permeable to urea. Mediates the efflux of glycerol, formed upon triglyceride hydrolysis, to avoid its accumulation in adipocytes and to make it available to other tissues. In the kidney, mediates the reabsorption of glycerol, preventing its loss in urine, again participating to energy homeostasis. In pancreatic beta cells, it also mediates the efflux of glycerol, regulating its intracellular levels. This is Aquaporin-7 from Homo sapiens (Human).